Reading from the N-terminus, the 151-residue chain is Probable cyclic pyranopterin monophosphate synthase (151 aa).

Substrate contacts are provided by residues 66 to 68 (MCH) and 102 to 103 (ME). D117 is a catalytic residue.

The protein belongs to the MoaC family. In terms of assembly, homohexamer; trimer of dimers.

It catalyses the reaction (8S)-3',8-cyclo-7,8-dihydroguanosine 5'-triphosphate = cyclic pyranopterin phosphate + diphosphate. Its pathway is cofactor biosynthesis; molybdopterin biosynthesis. Its function is as follows. Catalyzes the conversion of (8S)-3',8-cyclo-7,8-dihydroguanosine 5'-triphosphate to cyclic pyranopterin monophosphate (cPMP). In Sulfurisphaera tokodaii (strain DSM 16993 / JCM 10545 / NBRC 100140 / 7) (Sulfolobus tokodaii), this protein is Probable cyclic pyranopterin monophosphate synthase.